A 246-amino-acid polypeptide reads, in one-letter code: ATP synthase subunit a, chloroplastic (246 aa).

The next 4 helical transmembrane spans lie at 35 to 55 (GQVFIVSWLVIAALIGFALVG), 94 to 114 (VPYIATVFLFIFGANWAGALI), 133 to 153 (INVTVALALLTSLSYFYAGLS), and 202 to 222 (VFALLVPILIPLPVMTLGLFA).

It belongs to the ATPase A chain family. F-type ATPases have 2 components, CF(1) - the catalytic core - and CF(0) - the membrane proton channel. CF(1) has five subunits: alpha(3), beta(3), gamma(1), delta(1), epsilon(1). CF(0) has four main subunits: a, b, b' and c.

It is found in the plastid. It localises to the chloroplast thylakoid membrane. Key component of the proton channel; it plays a direct role in the translocation of protons across the membrane. This Rhodomonas salina (Cryptomonas salina) protein is ATP synthase subunit a, chloroplastic.